Here is a 533-residue protein sequence, read N- to C-terminus: Beta-1,4-mannosyl-glycoprotein 4-beta-N-acetylglucosaminyltransferase (533 aa).

At 1 to 7 (MKMRRYK) the chain is on the cytoplasmic side. A helical; Signal-anchor for type II membrane protein membrane pass occupies residues 8–23 (LFLMFCMAGLCLISFL). The Lumenal segment spans residues 24–533 (HFFKTLSYVT…ARGKLDEAEV (510 aa)). The interval 119–158 (KPGTKMLERPPPGRPEEKPEGANGSSARRPPRYLLSARER) is disordered. N-linked (GlcNAc...) asparagine glycans are attached at residues N141, N241, N259, and N397. Positions 507-533 (STAAGGWRHRGPEGRPPARGKLDEAEV) are disordered.

This sequence belongs to the glycosyltransferase 17 family. Interacts with MGAT4D.

The protein resides in the golgi apparatus membrane. It carries out the reaction N(4)-{beta-D-GlcNAc-(1-&gt;2)-alpha-D-Man-(1-&gt;3)-[beta-D-GlcNAc-(1-&gt;2)-alpha-D-Man-(1-&gt;6)]-beta-D-Man-(1-&gt;4)-beta-D-GlcNAc-(1-&gt;4)-beta-D-GlcNAc}-L-asparaginyl-[protein] + UDP-N-acetyl-alpha-D-glucosamine = N(4)-{beta-D-GlcNAc-(1-&gt;2)-alpha-D-Man-(1-&gt;3)-[beta-D-GlcNAc-(1-&gt;4)]-[beta-D-GlcNAc-(1-&gt;2)-alpha-D-Man-(1-&gt;6)]-beta-D-Man-(1-&gt;4)-beta-D-GlcNAc-(1-&gt;4)-beta-D-GlcNAc}-L-asparaginyl-[protein] + UDP + H(+). The protein operates within protein modification; protein glycosylation. It is involved in the regulation of the biosynthesis and biological function of glycoprotein oligosaccharides. Catalyzes the addition of N-acetylglucosamine in beta 1-4 linkage to the beta-linked mannose of the trimannosyl core of N-linked sugar chains, called bisecting N-acetylglucosamine (GlcNAc). It is one of the most important enzymes involved in the regulation of the biosynthesis of glycoprotein oligosaccharides. The addition of this bisecting GlcNAc residue alters not only the composition, but also the conformation of the N-glycan. The introduction of the bisecting GlcNAc residue results in the suppression of further processing and elongation of N-glycans, precluding the formation of beta-1,6 GlcNAc branching, catalyzed by MGAT5 since it is unable to use the bisected oligosaccharide as a substrate. Addition of bisecting N-acetylglucosamine to CDH1/E-cadherin modulates CDH1 cell membrane location. Inhibits NeuAc-alpha-2,3-Gal-beta-1,4-GlcNAc- formation which modulates sialylation levels and plays a role in cell migration regulation. In brain, addition of bisecting N-acetylglucosamine to BACE1 blocks its lysosomal targeting in response to oxidative stress and further degradation which increases its location to early endosome and the APP cleavage. This Homo sapiens (Human) protein is Beta-1,4-mannosyl-glycoprotein 4-beta-N-acetylglucosaminyltransferase.